The primary structure comprises 490 residues: Actin-related protein 6 (490 aa).

The protein belongs to the actin family. ARP6 subfamily.

Its subcellular location is the cytoplasm. The protein localises to the cytoskeleton. The chain is Actin-related protein 6 from Dictyostelium discoideum (Social amoeba).